The chain runs to 412 residues: FAD-dependent monooxygenase nscC (412 aa).

An N-terminal signal peptide occupies residues 1 to 21 (MGKQQETILIIGAGIAGLTTS). Residues Glu-35 and Ala-46 each coordinate FAD. N-linked (GlcNAc...) asparagine glycosylation is present at Asn-92. Arg-119 provides a ligand contact to FAD. N-linked (GlcNAc...) asparagine glycosylation is found at Asn-170 and Asn-231. FAD contacts are provided by Asp-326 and Gly-339.

The protein belongs to the paxM FAD-dependent monooxygenase family. Requires FAD as cofactor.

Its pathway is secondary metabolite biosynthesis. In terms of biological role, FAD-dependent monooxygenase; part of the gene cluster that mediates the biosynthesis of neosartoricin B, a prenylated anthracenone that probably exhibits T-cell antiproliferative activity, suggestive of a physiological role as an immunosuppressive agent. The non-reducing polyketide synthase nscA probably synthesizes and cyclizes the decaketide backbone. The hydrolase nscB then mediates the product release through hydrolysis followed by spontaneous decarboxylation. The prenyltransferase nscD catalyzes the addition of the dimethylallyl group to the aromatic C5. The FAD-dependent monooxygenase nscC is then responsible for the stereospecific hydroxylation at C2. Neosartoricin B can be converted into two additional compounds neosartoricins C and D. Neosartoricin C is a spirocyclic compound that is cyclized through the attack of C3 hydroxyl on C14, followed by dehydration. On the other hand, neosartoricin D is a further cyclized compound in which attack of C2 on C14 in neosartoricin C results in the formation of the acetal-containing dioxabicyclo-octanone ring. Both of these compounds are novel and possibly represent related metabolites of the gene cluster. The chain is FAD-dependent monooxygenase nscC from Arthroderma benhamiae (strain ATCC MYA-4681 / CBS 112371) (Trichophyton mentagrophytes).